We begin with the raw amino-acid sequence, 927 residues long: Translation initiation factor IF-2 (927 aa).

The disordered stretch occupies residues 27–337 (LGLPVKSHAS…GAPKPVTERK (311 aa)). The span at 49 to 69 (SFSSSKTKAPTNSVQTNQGVK) shows a compositional bias: polar residues. 2 stretches are compositionally biased toward basic and acidic residues: residues 70-86 (TESK…DDKP) and 101-138 (FKAE…DRRH). Low complexity predominate over residues 146–159 (GNRNDNRQGQQNNR). Basic and acidic residues-rich tracts occupy residues 160–171 (NKNDGRYADHKQ), 202–226 (YSRH…EQEL), and 234–257 (AQEE…KEIV). Over residues 300 to 316 (NWNNQNQVRNQRNSNWN) the composition is skewed to low complexity. Residues 428 to 597 (ERPPVVTIMG…LLVAEMEELK (170 aa)) enclose the tr-type G domain. Positions 437 to 444 (GHVDHGKT) are G1. Residue 437–444 (GHVDHGKT) participates in GTP binding. A G2 region spans residues 462–466 (GITQH). The tract at residues 483–486 (DTPG) is G3. GTP contacts are provided by residues 483-487 (DTPGH) and 537-540 (NKID). The segment at 537–540 (NKID) is G4. The G5 stretch occupies residues 573 to 575 (SAK).

It belongs to the TRAFAC class translation factor GTPase superfamily. Classic translation factor GTPase family. IF-2 subfamily.

It localises to the cytoplasm. Its function is as follows. One of the essential components for the initiation of protein synthesis. Protects formylmethionyl-tRNA from spontaneous hydrolysis and promotes its binding to the 30S ribosomal subunits. Also involved in the hydrolysis of GTP during the formation of the 70S ribosomal complex. This chain is Translation initiation factor IF-2, found in Streptococcus agalactiae serotype V (strain ATCC BAA-611 / 2603 V/R).